We begin with the raw amino-acid sequence, 342 residues long: N-acetyl-gamma-glutamyl-phosphate reductase (342 aa).

Residue C149 is part of the active site.

This sequence belongs to the NAGSA dehydrogenase family. Type 1 subfamily.

Its subcellular location is the cytoplasm. It carries out the reaction N-acetyl-L-glutamate 5-semialdehyde + phosphate + NADP(+) = N-acetyl-L-glutamyl 5-phosphate + NADPH + H(+). The protein operates within amino-acid biosynthesis; L-arginine biosynthesis; N(2)-acetyl-L-ornithine from L-glutamate: step 3/4. Catalyzes the NADPH-dependent reduction of N-acetyl-5-glutamyl phosphate to yield N-acetyl-L-glutamate 5-semialdehyde. In Roseobacter denitrificans (strain ATCC 33942 / OCh 114) (Erythrobacter sp. (strain OCh 114)), this protein is N-acetyl-gamma-glutamyl-phosphate reductase.